An 804-amino-acid chain; its full sequence is Phenylalanine--tRNA ligase beta subunit (804 aa).

One can recognise a tRNA-binding domain in the interval 39 to 147 (GPSFSNVVVA…PNLPLGEDLA (109 aa)). The region spanning 402–480 (ETVGEIHLRC…RIHGYDNIPV (79 aa)) is the B5 domain. The Mg(2+) site is built by aspartate 458, aspartate 464, glutamate 467, and glutamate 468. Residues 711–804 (SRYPESSRDV…IIDQTGARVR (94 aa)) enclose the FDX-ACB domain.

The protein belongs to the phenylalanyl-tRNA synthetase beta subunit family. Type 1 subfamily. Tetramer of two alpha and two beta subunits. Mg(2+) serves as cofactor.

It localises to the cytoplasm. It carries out the reaction tRNA(Phe) + L-phenylalanine + ATP = L-phenylalanyl-tRNA(Phe) + AMP + diphosphate + H(+). This Syntrophus aciditrophicus (strain SB) protein is Phenylalanine--tRNA ligase beta subunit.